Consider the following 217-residue polypeptide: Adenylate kinase (217 aa).

Residue 10–15 (GAGKGT) coordinates ATP. An NMP region spans residues 30 to 59 (STGDMFRAAMKEETDLGLEAKSYIDKGELV). AMP contacts are provided by residues threonine 31, arginine 36, 57–59 (ELV), 85–88 (GFPR), and glutamine 92. An LID region spans residues 126-163 (GRRICKNCGATYHLVFNPPAKENVCDKCGGELYQREDD). Residue arginine 127 coordinates ATP. 2 residues coordinate Zn(2+): cysteine 130 and cysteine 133. 136-137 (TY) serves as a coordination point for ATP. Zn(2+) contacts are provided by cysteine 150 and cysteine 153. Residues arginine 160 and arginine 171 each contribute to the AMP site. Lysine 199 serves as a coordination point for ATP.

Belongs to the adenylate kinase family. As to quaternary structure, monomer.

The protein localises to the cytoplasm. The catalysed reaction is AMP + ATP = 2 ADP. It functions in the pathway purine metabolism; AMP biosynthesis via salvage pathway; AMP from ADP: step 1/1. Catalyzes the reversible transfer of the terminal phosphate group between ATP and AMP. Plays an important role in cellular energy homeostasis and in adenine nucleotide metabolism. This chain is Adenylate kinase, found in Bacillus licheniformis (strain ATCC 14580 / DSM 13 / JCM 2505 / CCUG 7422 / NBRC 12200 / NCIMB 9375 / NCTC 10341 / NRRL NRS-1264 / Gibson 46).